We begin with the raw amino-acid sequence, 420 residues long: Putative kinase Y4mE (420 aa).

The active-site Proton acceptor is Asp302.

It belongs to the HipA Ser/Thr kinase family.

The chain is Putative kinase Y4mE from Sinorhizobium fredii (strain NBRC 101917 / NGR234).